Reading from the N-terminus, the 639-residue chain is AP2-like ethylene-responsive transcription factor CRL5 (639 aa).

Disordered regions lie at residues 25–59 (PHMA…QQQH) and 258–277 (GRKR…HHRK). Residues 43-59 (QQQQQQQQQQHHQQQQH) are compositionally biased toward low complexity. 2 consecutive DNA-binding regions (AP2/ERF) follow at residues 288–351 (QYRG…INFP) and 387–445 (MYRG…TNFD). A compositionally biased stretch (low complexity) spans 547–561 (QQQQQHMSMSAASSL). A disordered region spans residues 547 to 579 (QQQQQHMSMSAASSLVTSLSNSREGSPDRGGGL).

This sequence belongs to the AP2/ERF transcription factor family. AP2 subfamily. In terms of tissue distribution, highly expressed at the base of the stem. Expressed in stems. Expressed a low levels in crown roots and seeds. Expressed in the stem region where adventitious (crown) root initiation occurs.

It localises to the nucleus. In terms of biological role, acts as a positive regulator of adventitious (crown) root formation by promoting its initiation. Promotes adventitious root initiation through repression of cytokinin signaling by positively regulating the two-component response regulator RR1. Regulated by the auxin response factor and transcriptional activator ARF23/ARF1. The protein is AP2-like ethylene-responsive transcription factor CRL5 of Oryza sativa subsp. japonica (Rice).